The chain runs to 387 residues: 3-ketoacyl-CoA thiolase (387 aa).

Cysteine 91 acts as the Acyl-thioester intermediate in catalysis. Residues histidine 343 and cysteine 373 each act as proton acceptor in the active site.

Belongs to the thiolase-like superfamily. Thiolase family. Heterotetramer of two alpha chains (FadB) and two beta chains (FadA).

The protein resides in the cytoplasm. It carries out the reaction an acyl-CoA + acetyl-CoA = a 3-oxoacyl-CoA + CoA. The protein operates within lipid metabolism; fatty acid beta-oxidation. Its function is as follows. Catalyzes the final step of fatty acid oxidation in which acetyl-CoA is released and the CoA ester of a fatty acid two carbons shorter is formed. This is 3-ketoacyl-CoA thiolase from Enterobacter sp. (strain 638).